The sequence spans 254 residues: tRNA (guanine-N(1)-)-methyltransferase (254 aa).

S-adenosyl-L-methionine contacts are provided by residues Gly-119 and 139–144 (IGDFVL).

The protein belongs to the RNA methyltransferase TrmD family. As to quaternary structure, homodimer.

The protein localises to the cytoplasm. It carries out the reaction guanosine(37) in tRNA + S-adenosyl-L-methionine = N(1)-methylguanosine(37) in tRNA + S-adenosyl-L-homocysteine + H(+). Functionally, specifically methylates guanosine-37 in various tRNAs. This Dechloromonas aromatica (strain RCB) protein is tRNA (guanine-N(1)-)-methyltransferase.